The primary structure comprises 179 residues: Large ribosomal subunit protein uL5 (179 aa).

Belongs to the universal ribosomal protein uL5 family. Part of the 50S ribosomal subunit; part of the 5S rRNA/L5/L18/L25 subcomplex. Contacts the 5S rRNA and the P site tRNA. Forms a bridge to the 30S subunit in the 70S ribosome.

Functionally, this is one of the proteins that bind and probably mediate the attachment of the 5S RNA into the large ribosomal subunit, where it forms part of the central protuberance. In the 70S ribosome it contacts protein S13 of the 30S subunit (bridge B1b), connecting the 2 subunits; this bridge is implicated in subunit movement. Contacts the P site tRNA; the 5S rRNA and some of its associated proteins might help stabilize positioning of ribosome-bound tRNAs. The sequence is that of Large ribosomal subunit protein uL5 from Pectobacterium atrosepticum (strain SCRI 1043 / ATCC BAA-672) (Erwinia carotovora subsp. atroseptica).